Reading from the N-terminus, the 206-residue chain is 2,3-bisphosphoglycerate-dependent phosphoglycerate mutase (206 aa).

Substrate contacts are provided by residues 9–16 (RHGQSEWN), 22–23 (TG), Arg61, 88–91 (ERDY), Lys99, 115–116 (RR), and 159–160 (GN). His10 serves as the catalytic Tele-phosphohistidine intermediate. The active-site Proton donor/acceptor is Glu88.

The protein belongs to the phosphoglycerate mutase family. BPG-dependent PGAM subfamily. In terms of assembly, homodimer.

It carries out the reaction (2R)-2-phosphoglycerate = (2R)-3-phosphoglycerate. It functions in the pathway carbohydrate degradation; glycolysis; pyruvate from D-glyceraldehyde 3-phosphate: step 3/5. Functionally, catalyzes the interconversion of 2-phosphoglycerate and 3-phosphoglycerate. This Brucella anthropi (strain ATCC 49188 / DSM 6882 / CCUG 24695 / JCM 21032 / LMG 3331 / NBRC 15819 / NCTC 12168 / Alc 37) (Ochrobactrum anthropi) protein is 2,3-bisphosphoglycerate-dependent phosphoglycerate mutase.